A 255-amino-acid polypeptide reads, in one-letter code: Hemin import ATP-binding protein HmuV (255 aa).

An ABC transporter domain is found at 2–238 (LDVEGLHLKR…AALNAVFGID (237 aa)). 34-41 (GPNGAGKS) contacts ATP.

The protein belongs to the ABC transporter superfamily. Heme (hemin) importer (TC 3.A.1.14.5) family. The complex is composed of two ATP-binding proteins (HmuV), two transmembrane proteins (HmuU) and a solute-binding protein (HmuT).

The protein resides in the cell inner membrane. In terms of biological role, part of the ABC transporter complex HmuTUV involved in hemin import. Responsible for energy coupling to the transport system. This chain is Hemin import ATP-binding protein HmuV, found in Pseudomonas entomophila (strain L48).